Here is a 374-residue protein sequence, read N- to C-terminus: Heat stress transcription factor A-8 (374 aa).

Residues 17–112 mediate DNA binding; that stretch reads VAPFLRKCYD…LLKNVIRRKN (96 aa). The segment at 126–192 is hydrophobic repeat HR-A/B; sequence TTYAQEKSGL…EMLSFLVMVM (67 aa). Residues 285–294 carry the AHA1 motif; the sequence is DGAWEKLLLL. A Nuclear localization signal motif is present at residues 298 to 303; that stretch reads RKKTKK. The AHA2 motif lies at 330 to 339; it reads KSYMLKLISE. Positions 363 to 370 match the Nuclear export signal motif; sequence LTEQMELL.

It belongs to the HSF family. Class A subfamily. As to quaternary structure, homotrimer. In terms of processing, exhibits temperature-dependent phosphorylation.

Its subcellular location is the cytoplasm. The protein resides in the nucleus. Transcriptional activator that specifically binds DNA sequence 5'-AGAAnnTTCT-3' known as heat shock promoter elements (HSE). This chain is Heat stress transcription factor A-8 (HSFA8), found in Arabidopsis thaliana (Mouse-ear cress).